A 601-amino-acid polypeptide reads, in one-letter code: Elongation factor 4 (601 aa).

A tr-type G domain is found at 7 to 189 (DRIRNFSIIA…ALVTRLPAPK (183 aa)). GTP is bound by residues 19 to 24 (DHGKST) and 136 to 139 (NKVD).

This sequence belongs to the TRAFAC class translation factor GTPase superfamily. Classic translation factor GTPase family. LepA subfamily.

The protein localises to the cell inner membrane. It carries out the reaction GTP + H2O = GDP + phosphate + H(+). In terms of biological role, required for accurate and efficient protein synthesis under certain stress conditions. May act as a fidelity factor of the translation reaction, by catalyzing a one-codon backward translocation of tRNAs on improperly translocated ribosomes. Back-translocation proceeds from a post-translocation (POST) complex to a pre-translocation (PRE) complex, thus giving elongation factor G a second chance to translocate the tRNAs correctly. Binds to ribosomes in a GTP-dependent manner. The sequence is that of Elongation factor 4 from Granulibacter bethesdensis (strain ATCC BAA-1260 / CGDNIH1).